We begin with the raw amino-acid sequence, 151 residues long: Pyruvoyl-dependent arginine decarboxylase (151 aa).

Ser-42 bears the Pyruvic acid (Ser) mark.

It belongs to the PdaD family. It depends on pyruvate as a cofactor.

The catalysed reaction is L-arginine + H(+) = agmatine + CO2. The polypeptide is Pyruvoyl-dependent arginine decarboxylase (Methanothermobacter thermautotrophicus (strain ATCC 29096 / DSM 1053 / JCM 10044 / NBRC 100330 / Delta H) (Methanobacterium thermoautotrophicum)).